We begin with the raw amino-acid sequence, 114 residues long: Ribosome-binding factor A (114 aa).

It belongs to the RbfA family. Monomer. Binds 30S ribosomal subunits, but not 50S ribosomal subunits or 70S ribosomes.

It localises to the cytoplasm. One of several proteins that assist in the late maturation steps of the functional core of the 30S ribosomal subunit. Associates with free 30S ribosomal subunits (but not with 30S subunits that are part of 70S ribosomes or polysomes). Required for efficient processing of 16S rRNA. May interact with the 5'-terminal helix region of 16S rRNA. This is Ribosome-binding factor A from Phytoplasma mali (strain AT).